The following is a 149-amino-acid chain: Large ribosomal subunit protein uL13 (149 aa).

Belongs to the universal ribosomal protein uL13 family. As to quaternary structure, part of the 50S ribosomal subunit.

This protein is one of the early assembly proteins of the 50S ribosomal subunit, although it is not seen to bind rRNA by itself. It is important during the early stages of 50S assembly. In Thermotoga maritima (strain ATCC 43589 / DSM 3109 / JCM 10099 / NBRC 100826 / MSB8), this protein is Large ribosomal subunit protein uL13.